We begin with the raw amino-acid sequence, 385 residues long: uncharacterized protein (385 aa).

9 helical membrane-spanning segments follow: residues 12-32 (GVAI…PKAA), 50-70 (WAFL…LLFG), 90-110 (LLVL…ILLA), 132-152 (FNTG…LGLI), 195-215 (LALG…GAAL), 233-253 (TGFV…ALQW), 272-292 (LSAP…WPQL), 312-332 (YLLQ…FMHF), and 335-355 (LELL…SVIW).

The protein to B.subtilis YxaH and YrkO.

The protein resides in the cell membrane. In terms of biological role, involved in transport. This is an uncharacterized protein from Escherichia coli (strain K12).